A 166-amino-acid chain; its full sequence is Crossover junction endodeoxyribonuclease RuvC (166 aa).

Catalysis depends on residues aspartate 11, glutamate 70, and aspartate 142. Mg(2+) contacts are provided by aspartate 11, glutamate 70, and aspartate 142.

This sequence belongs to the RuvC family. As to quaternary structure, homodimer which binds Holliday junction (HJ) DNA. The HJ becomes 2-fold symmetrical on binding to RuvC with unstacked arms; it has a different conformation from HJ DNA in complex with RuvA. In the full resolvosome a probable DNA-RuvA(4)-RuvB(12)-RuvC(2) complex forms which resolves the HJ. Mg(2+) serves as cofactor.

It localises to the cytoplasm. It catalyses the reaction Endonucleolytic cleavage at a junction such as a reciprocal single-stranded crossover between two homologous DNA duplexes (Holliday junction).. In terms of biological role, the RuvA-RuvB-RuvC complex processes Holliday junction (HJ) DNA during genetic recombination and DNA repair. Endonuclease that resolves HJ intermediates. Cleaves cruciform DNA by making single-stranded nicks across the HJ at symmetrical positions within the homologous arms, yielding a 5'-phosphate and a 3'-hydroxyl group; requires a central core of homology in the junction. The consensus cleavage sequence is 5'-(A/T)TT(C/G)-3'. Cleavage occurs on the 3'-side of the TT dinucleotide at the point of strand exchange. HJ branch migration catalyzed by RuvA-RuvB allows RuvC to scan DNA until it finds its consensus sequence, where it cleaves and resolves the cruciform DNA. The chain is Crossover junction endodeoxyribonuclease RuvC from Nitratidesulfovibrio vulgaris (strain DP4) (Desulfovibrio vulgaris).